The chain runs to 240 residues: MPTLGVNIDHVATIRQARRTVEPDPIAAAVLAELGGADGITVHLREDRRHIQERDVRLLRQTVRTHLNLEMAATAEMVAIALELKPDYITLVPERREEITTEGGLDVNGQPERLQTVIDTLQQAGIPVSLFIDAEAKQIETAARLGAKFIELHTGRYAEAGSPQAQQRELETLAQGCARAIDLGVRVNAGHGLTYWNVRPVALLPGMEELNIGHTIVSRAVLVGMERAVREMKQAIQGTF.

Asparagine 7 lines the 3-amino-2-oxopropyl phosphate pocket. Position 9–10 (9–10) interacts with 1-deoxy-D-xylulose 5-phosphate; sequence DH. Arginine 18 is a 3-amino-2-oxopropyl phosphate binding site. Histidine 43 serves as the catalytic Proton acceptor. 1-deoxy-D-xylulose 5-phosphate-binding residues include arginine 45 and histidine 50. Residue glutamate 70 is the Proton acceptor of the active site. Threonine 100 contacts 1-deoxy-D-xylulose 5-phosphate. The Proton donor role is filled by histidine 191. Residues glycine 192 and 213-214 contribute to the 3-amino-2-oxopropyl phosphate site; that span reads GH.

It belongs to the PNP synthase family. In terms of assembly, homooctamer; tetramer of dimers.

The protein localises to the cytoplasm. It carries out the reaction 3-amino-2-oxopropyl phosphate + 1-deoxy-D-xylulose 5-phosphate = pyridoxine 5'-phosphate + phosphate + 2 H2O + H(+). Its pathway is cofactor biosynthesis; pyridoxine 5'-phosphate biosynthesis; pyridoxine 5'-phosphate from D-erythrose 4-phosphate: step 5/5. Its function is as follows. Catalyzes the complicated ring closure reaction between the two acyclic compounds 1-deoxy-D-xylulose-5-phosphate (DXP) and 3-amino-2-oxopropyl phosphate (1-amino-acetone-3-phosphate or AAP) to form pyridoxine 5'-phosphate (PNP) and inorganic phosphate. This is Pyridoxine 5'-phosphate synthase from Cyanothece sp. (strain PCC 7425 / ATCC 29141).